We begin with the raw amino-acid sequence, 430 residues long: Adenylosuccinate synthetase (430 aa).

GTP contacts are provided by residues 12 to 18 (GDEGKGK) and 40 to 42 (GHT). The Proton acceptor role is filled by Asp13. 2 residues coordinate Mg(2+): Asp13 and Gly40. IMP contacts are provided by residues 13-16 (DEGK), 38-41 (NAGH), Thr128, Arg142, Gln223, Thr238, and Arg302. The active-site Proton donor is His41. 298–304 (TTTGRPR) serves as a coordination point for substrate. Residues Arg304, 330–332 (SID), and 412–414 (SVG) contribute to the GTP site.

Belongs to the adenylosuccinate synthetase family. Homodimer. Mg(2+) is required as a cofactor.

It is found in the cytoplasm. It catalyses the reaction IMP + L-aspartate + GTP = N(6)-(1,2-dicarboxyethyl)-AMP + GDP + phosphate + 2 H(+). The protein operates within purine metabolism; AMP biosynthesis via de novo pathway; AMP from IMP: step 1/2. Functionally, plays an important role in the de novo pathway of purine nucleotide biosynthesis. Catalyzes the first committed step in the biosynthesis of AMP from IMP. The chain is Adenylosuccinate synthetase from Streptococcus pyogenes serotype M2 (strain MGAS10270).